A 346-amino-acid chain; its full sequence is GTPase Obg (346 aa).

The region spanning 1 to 158 (MKFLDQVKIY…RAIWLRLKLI (158 aa)) is the Obg domain. The region spanning 159–327 (ADVGLVGLPN…LLREAFALVR (169 aa)) is the OBG-type G domain. GTP contacts are provided by residues 165-172 (GLPNAGKS), 190-194 (FTTLA), 212-215 (DIPG), 279-282 (NKID), and 308-310 (SGF). Positions 172 and 192 each coordinate Mg(2+).

It belongs to the TRAFAC class OBG-HflX-like GTPase superfamily. OBG GTPase family. As to quaternary structure, monomer. Mg(2+) serves as cofactor.

It localises to the cytoplasm. An essential GTPase which binds GTP, GDP and possibly (p)ppGpp with moderate affinity, with high nucleotide exchange rates and a fairly low GTP hydrolysis rate. Plays a role in control of the cell cycle, stress response, ribosome biogenesis and in those bacteria that undergo differentiation, in morphogenesis control. The sequence is that of GTPase Obg from Phenylobacterium zucineum (strain HLK1).